A 939-amino-acid polypeptide reads, in one-letter code: Vacuolar membrane protease (939 aa).

Over 1-11 the chain is Cytoplasmic; it reads MGFNSIFKFRK. A helical membrane pass occupies residues 12 to 32; that stretch reads TSLSLLLFAVYFIIGILYFID. Over 33 to 356 the chain is Vacuolar; it reads KTRYKHSLPI…TFVAIPSTKL (324 aa). 3 N-linked (GlcNAc...) asparagine glycosylation sites follow: Asn59, Asn88, and Asn114. Residues His149 and Asp161 each coordinate Zn(2+). The active-site Proton acceptor is Glu193. Residues Glu194, Glu219, and His293 each coordinate Zn(2+). Residue Asn326 is glycosylated (N-linked (GlcNAc...) asparagine). Residues 357-377 traverse the membrane as a helical segment; that stretch reads FWINIALLIIMPIISIFLFSI. The Cytoplasmic segment spans residues 378–388; sequence VKKYNNEIIDS. Residues 389-409 form a helical membrane-spanning segment; the sequence is GNIWWRLPISAMSSGTIIIFT. The Vacuolar segment spans residues 410-424; the sequence is TKLIMKWNPYILSRN. The helical transmembrane segment at 425–445 threads the bilayer; sequence FLLPLIGLTFEFIILNSYILT. Topologically, residues 446 to 453 are cytoplasmic; sequence MFENLSSS. A helical transmembrane segment spans residues 454 to 474; the sequence is FDFKTIAINEISFLFWIVLAY. Over 475-491 the chain is Vacuolar; sequence QTWKLYDNNYQNTGIYP. Residues 492 to 512 form a helical membrane-spanning segment; that stretch reads FTICYIVMATAGNIGYLFLIF. Over 513 to 588 the chain is Cytoplasmic; sequence KNIEIVEDEE…NQRTILKESK (76 aa). Residues 540 to 552 show a composition bias toward basic and acidic residues; that stretch reads YRDEINGRDDSSR. The tract at residues 540–561 is disordered; sequence YRDEINGRDDSSRDSNSASIPT. A helical membrane pass occupies residues 589–609; sequence LVYNYDWIIEFLLVVPFSTFL. Residues 610–636 lie on the Vacuolar side of the membrane; it reads LYNSLELIMDAVNQTIQETGDLYKVYK. Residue Asn622 is glycosylated (N-linked (GlcNAc...) asparagine). The helical transmembrane segment at 637 to 657 threads the bilayer; sequence ILAIGSILISIPTLPFAYKIG. Over 658-663 the chain is Cytoplasmic; that stretch reads CQLGKT. A helical transmembrane segment spans residues 664-684; sequence LTFISIGCLLISMALAPFTEM. Topologically, residues 685 to 939 are vacuolar; sequence NPIKFRFMQV…LVKLTEAMVL (255 aa). N-linked (GlcNAc...) asparagine glycosylation is found at Asn810 and Asn820.

Belongs to the peptidase M28 family. It depends on Zn(2+) as a cofactor.

Its subcellular location is the vacuole membrane. Functionally, may be involved in vacuolar sorting and osmoregulation. In Vanderwaltozyma polyspora (strain ATCC 22028 / DSM 70294 / BCRC 21397 / CBS 2163 / NBRC 10782 / NRRL Y-8283 / UCD 57-17) (Kluyveromyces polysporus), this protein is Vacuolar membrane protease.